A 477-amino-acid chain; its full sequence is Glutamate--tRNA ligase (477 aa).

The 'HIGH' region motif lies at 18–28 (PSPTGFIHLGN). Over residues 128-138 (PRYDGSWRPEP) the composition is skewed to basic and acidic residues. The disordered stretch occupies residues 128–151 (PRYDGSWRPEPGKTLPPVPAGMSP). The short motif at 250–254 (KLSKR) is the 'KMSKS' region element. Lys-253 serves as a coordination point for ATP.

The protein belongs to the class-I aminoacyl-tRNA synthetase family. Glutamate--tRNA ligase type 1 subfamily. In terms of assembly, monomer.

It localises to the cytoplasm. The catalysed reaction is tRNA(Glu) + L-glutamate + ATP = L-glutamyl-tRNA(Glu) + AMP + diphosphate. Its function is as follows. Catalyzes the attachment of glutamate to tRNA(Glu) in a two-step reaction: glutamate is first activated by ATP to form Glu-AMP and then transferred to the acceptor end of tRNA(Glu). This chain is Glutamate--tRNA ligase, found in Verminephrobacter eiseniae (strain EF01-2).